The chain runs to 178 residues: MKANPPLAWHPVPVSAPVNLRWWLMHQESLTRLLQAHCEHFRVEPVFQTLATACIDELEVMNLRRQNQVLVREVYLRCNETPVVFAHSIVKKEHLRGAWRGLSRLGNRSLGTMLFTNPLIQRTPLAFKKLKPHHPLFERACKQLQMRPINLWARRSLFILLRQPILVTEVFLPAIHQL.

Residues R72, L110, and E169 each coordinate substrate.

The protein belongs to the UbiC family.

The protein resides in the cytoplasm. The catalysed reaction is chorismate = 4-hydroxybenzoate + pyruvate. Its pathway is cofactor biosynthesis; ubiquinone biosynthesis. Functionally, removes the pyruvyl group from chorismate, with concomitant aromatization of the ring, to provide 4-hydroxybenzoate (4HB) for the ubiquinone pathway. This chain is Probable chorismate pyruvate-lyase, found in Nitrosomonas eutropha (strain DSM 101675 / C91 / Nm57).